A 206-amino-acid chain; its full sequence is Ribonuclease M5 (206 aa).

One can recognise a Toprim domain in the interval 8–91; that stretch reads NEVIVVEGRD…AFLNRDEARP (84 aa). Mg(2+)-binding residues include glutamate 14, aspartate 60, and aspartate 62.

This sequence belongs to the ribonuclease M5 family. Requires Mg(2+) as cofactor.

It is found in the cytoplasm. It carries out the reaction Endonucleolytic cleavage of RNA, removing 21 and 42 nucleotides, respectively, from the 5'- and 3'-termini of a 5S-rRNA precursor.. Required for correct processing of both the 5' and 3' ends of 5S rRNA precursor. Cleaves both sides of a double-stranded region yielding mature 5S rRNA in one step. The sequence is that of Ribonuclease M5 from Lactococcus lactis subsp. lactis (strain IL1403) (Streptococcus lactis).